The chain runs to 367 residues: UDP-N-acetylglucosamine--N-acetylmuramyl-(pentapeptide) pyrophosphoryl-undecaprenol N-acetylglucosamine transferase (367 aa).

Residues 11–13 (TAG), Asn-125, Arg-163, Ser-197, and Gln-289 contribute to the UDP-N-acetyl-alpha-D-glucosamine site.

The protein belongs to the glycosyltransferase 28 family. MurG subfamily.

The protein localises to the cell membrane. The enzyme catalyses di-trans,octa-cis-undecaprenyl diphospho-N-acetyl-alpha-D-muramoyl-L-alanyl-D-glutamyl-meso-2,6-diaminopimeloyl-D-alanyl-D-alanine + UDP-N-acetyl-alpha-D-glucosamine = di-trans,octa-cis-undecaprenyl diphospho-[N-acetyl-alpha-D-glucosaminyl-(1-&gt;4)]-N-acetyl-alpha-D-muramoyl-L-alanyl-D-glutamyl-meso-2,6-diaminopimeloyl-D-alanyl-D-alanine + UDP + H(+). It participates in cell wall biogenesis; peptidoglycan biosynthesis. Its function is as follows. Cell wall formation. Catalyzes the transfer of a GlcNAc subunit on undecaprenyl-pyrophosphoryl-MurNAc-pentapeptide (lipid intermediate I) to form undecaprenyl-pyrophosphoryl-MurNAc-(pentapeptide)GlcNAc (lipid intermediate II). The sequence is that of UDP-N-acetylglucosamine--N-acetylmuramyl-(pentapeptide) pyrophosphoryl-undecaprenol N-acetylglucosamine transferase from Clavibacter michiganensis subsp. michiganensis (strain NCPPB 382).